Consider the following 547-residue polypeptide: CTP synthase (547 aa).

The tract at residues 1–265 (MTKFVFVTGG…DRIVCEKLAL (265 aa)) is amidoligase domain. S13 contributes to the CTP binding site. UTP is bound at residue S13. ATP contacts are provided by residues 14–19 (SLGKGI) and D71. The Mg(2+) site is built by D71 and E139. CTP contacts are provided by residues 146 to 148 (DIE), 186 to 191 (KTKPTQ), and K222. UTP is bound by residues 186–191 (KTKPTQ) and K222. Residues 290–542 (TIGMVGKYVD…IKAALAHKHA (253 aa)) enclose the Glutamine amidotransferase type-1 domain. Residue G351 participates in L-glutamine binding. The active-site Nucleophile; for glutamine hydrolysis is the C378. Residues 379–382 (LGMQ), E402, and R468 contribute to the L-glutamine site. Catalysis depends on residues H515 and E517.

It belongs to the CTP synthase family. In terms of assembly, homotetramer.

It carries out the reaction UTP + L-glutamine + ATP + H2O = CTP + L-glutamate + ADP + phosphate + 2 H(+). It catalyses the reaction L-glutamine + H2O = L-glutamate + NH4(+). The catalysed reaction is UTP + NH4(+) + ATP = CTP + ADP + phosphate + 2 H(+). It participates in pyrimidine metabolism; CTP biosynthesis via de novo pathway; CTP from UDP: step 2/2. With respect to regulation, allosterically activated by GTP, when glutamine is the substrate; GTP has no effect on the reaction when ammonia is the substrate. The allosteric effector GTP functions by stabilizing the protein conformation that binds the tetrahedral intermediate(s) formed during glutamine hydrolysis. Inhibited by the product CTP, via allosteric rather than competitive inhibition. Its function is as follows. Catalyzes the ATP-dependent amination of UTP to CTP with either L-glutamine or ammonia as the source of nitrogen. Regulates intracellular CTP levels through interactions with the four ribonucleotide triphosphates. In Janthinobacterium sp. (strain Marseille) (Minibacterium massiliensis), this protein is CTP synthase.